We begin with the raw amino-acid sequence, 418 residues long: Protein YdhQ (418 aa).

The polypeptide is Protein YdhQ (ydhQ) (Escherichia coli (strain K12)).